The chain runs to 188 residues: Nicotinamide-nucleotide adenylyltransferase (188 aa).

The disordered stretch occupies residues 166–188; that stretch reads SDSLERYAATGESLPESLDDLDD.

It belongs to the archaeal NMN adenylyltransferase family.

The protein resides in the cytoplasm. It carries out the reaction beta-nicotinamide D-ribonucleotide + ATP + H(+) = diphosphate + NAD(+). The protein operates within cofactor biosynthesis; NAD(+) biosynthesis; NAD(+) from nicotinamide D-ribonucleotide: step 1/1. The protein is Nicotinamide-nucleotide adenylyltransferase of Haloarcula marismortui (strain ATCC 43049 / DSM 3752 / JCM 8966 / VKM B-1809) (Halobacterium marismortui).